Consider the following 67-residue polypeptide: UPF0434 protein Lcho_2556 (67 aa).

Belongs to the UPF0434 family.

This chain is UPF0434 protein Lcho_2556, found in Leptothrix cholodnii (strain ATCC 51168 / LMG 8142 / SP-6) (Leptothrix discophora (strain SP-6)).